The following is a 319-amino-acid chain: Pantothenate kinase (319 aa).

Position 101 to 108 (101 to 108 (GSVAVGKS)) interacts with ATP.

It belongs to the prokaryotic pantothenate kinase family.

It localises to the cytoplasm. It carries out the reaction (R)-pantothenate + ATP = (R)-4'-phosphopantothenate + ADP + H(+). The protein operates within cofactor biosynthesis; coenzyme A biosynthesis; CoA from (R)-pantothenate: step 1/5. This is Pantothenate kinase from Clavibacter michiganensis subsp. michiganensis (strain NCPPB 382).